A 193-amino-acid polypeptide reads, in one-letter code: NADH-quinone oxidoreductase subunit B (193 aa).

Positions 72, 73, 137, and 167 each coordinate [4Fe-4S] cluster.

The protein belongs to the complex I 20 kDa subunit family. As to quaternary structure, NDH-1 is composed of 14 different subunits. Subunits NuoB, C, D, E, F, and G constitute the peripheral sector of the complex. [4Fe-4S] cluster is required as a cofactor.

It is found in the cell inner membrane. It catalyses the reaction a quinone + NADH + 5 H(+)(in) = a quinol + NAD(+) + 4 H(+)(out). Functionally, NDH-1 shuttles electrons from NADH, via FMN and iron-sulfur (Fe-S) centers, to quinones in the respiratory chain. The immediate electron acceptor for the enzyme in this species is believed to be ubiquinone. Couples the redox reaction to proton translocation (for every two electrons transferred, four hydrogen ions are translocated across the cytoplasmic membrane), and thus conserves the redox energy in a proton gradient. The sequence is that of NADH-quinone oxidoreductase subunit B from Caulobacter vibrioides (strain ATCC 19089 / CIP 103742 / CB 15) (Caulobacter crescentus).